The following is a 361-amino-acid chain: Holliday junction branch migration complex subunit RuvB (361 aa).

The tract at residues 1–181 (MKDQRLLDSV…FGIPIRLNFY (181 aa)) is large ATPase domain (RuvB-L). Residues Leu20, Arg21, Gly62, Lys65, Thr66, Thr67, 128–130 (EDY), Arg171, Tyr181, and Arg218 contribute to the ATP site. Thr66 lines the Mg(2+) pocket. The interval 182-252 (TIEELEYIVQ…VADEALSRLE (71 aa)) is small ATPAse domain (RuvB-S). The tract at residues 255-361 (HLGLDPLDRR…QTTLWDEADE (107 aa)) is head domain (RuvB-H). DNA contacts are provided by Arg291, Arg310, and Arg315.

Belongs to the RuvB family. Homohexamer. Forms an RuvA(8)-RuvB(12)-Holliday junction (HJ) complex. HJ DNA is sandwiched between 2 RuvA tetramers; dsDNA enters through RuvA and exits via RuvB. An RuvB hexamer assembles on each DNA strand where it exits the tetramer. Each RuvB hexamer is contacted by two RuvA subunits (via domain III) on 2 adjacent RuvB subunits; this complex drives branch migration. In the full resolvosome a probable DNA-RuvA(4)-RuvB(12)-RuvC(2) complex forms which resolves the HJ.

The protein localises to the cytoplasm. The catalysed reaction is ATP + H2O = ADP + phosphate + H(+). In terms of biological role, the RuvA-RuvB-RuvC complex processes Holliday junction (HJ) DNA during genetic recombination and DNA repair, while the RuvA-RuvB complex plays an important role in the rescue of blocked DNA replication forks via replication fork reversal (RFR). RuvA specifically binds to HJ cruciform DNA, conferring on it an open structure. The RuvB hexamer acts as an ATP-dependent pump, pulling dsDNA into and through the RuvAB complex. RuvB forms 2 homohexamers on either side of HJ DNA bound by 1 or 2 RuvA tetramers; 4 subunits per hexamer contact DNA at a time. Coordinated motions by a converter formed by DNA-disengaged RuvB subunits stimulates ATP hydrolysis and nucleotide exchange. Immobilization of the converter enables RuvB to convert the ATP-contained energy into a lever motion, pulling 2 nucleotides of DNA out of the RuvA tetramer per ATP hydrolyzed, thus driving DNA branch migration. The RuvB motors rotate together with the DNA substrate, which together with the progressing nucleotide cycle form the mechanistic basis for DNA recombination by continuous HJ branch migration. Branch migration allows RuvC to scan DNA until it finds its consensus sequence, where it cleaves and resolves cruciform DNA. This Bartonella quintana (strain Toulouse) (Rochalimaea quintana) protein is Holliday junction branch migration complex subunit RuvB.